A 254-amino-acid chain; its full sequence is Putative ankyrin-containing lipoprotein Lxx09580 (254 aa).

The first 22 residues, 1–22 (MTEIRYVRLLTLVLASSVLLAG), serve as a signal peptide directing secretion. C23 is lipidated: N-palmitoyl cysteine. C23 is lipidated: S-diacylglycerol cysteine. 5 ANK repeats span residues 56–85 (AATASLHAAARSGDAEAVRSALAAGAAIED), 89–118 (GGRTPLVEAAKGNHVEAARALIEAGADVNA), 122–151 (IQDSAYLYAGAEGYLEILRMTLTTGADVNA), 155–184 (FNGTALIPASEHAHTEVVRMLIAAGVDLDH), and 188–222 (PGWTAMQEAIVLGNGGAGAQDVVRQLLAAGANPDI).

The protein localises to the cell membrane. This chain is Putative ankyrin-containing lipoprotein Lxx09580, found in Leifsonia xyli subsp. xyli (strain CTCB07).